The primary structure comprises 122 residues: Small ribosomal subunit protein uS13 (122 aa).

The interval 93-122 is disordered; that stretch reads RRGLPVRGQRTKTNARTRKGPKKTIAGKKK.

Belongs to the universal ribosomal protein uS13 family. In terms of assembly, part of the 30S ribosomal subunit. Forms a loose heterodimer with protein S19. Forms two bridges to the 50S subunit in the 70S ribosome.

Functionally, located at the top of the head of the 30S subunit, it contacts several helices of the 16S rRNA. In the 70S ribosome it contacts the 23S rRNA (bridge B1a) and protein L5 of the 50S subunit (bridge B1b), connecting the 2 subunits; these bridges are implicated in subunit movement. Contacts the tRNAs in the A and P-sites. In Corynebacterium urealyticum (strain ATCC 43042 / DSM 7109), this protein is Small ribosomal subunit protein uS13.